Consider the following 421-residue polypeptide: Functional amyloid transporter FapF (421 aa).

The first 24 residues, 1–24 (MTQTLSLRAVLCATTLVSPFLAQA), serve as a signal peptide directing secretion. A coiled-coil region spans residues 23–64 (QAATESEVEALKKELLELRQRYEAQQNALMVLEQRVRQVEAQ).

It belongs to the amyloid transporter (TC 9.B.153) family.

It is found in the secreted. Its subcellular location is the cell surface. The protein localises to the cell outer membrane. In terms of biological role, transports fibril components across the outer membrane. Upon overexpression of the endogenous six-gene locus (fapA-fapF), cells form large clumps during liquid growth, make large amounts of biofilm and produce amyloid fibrils. This Pseudomonas aeruginosa (strain ATCC 15692 / DSM 22644 / CIP 104116 / JCM 14847 / LMG 12228 / 1C / PRS 101 / PAO1) protein is Functional amyloid transporter FapF.